The sequence spans 107 residues: Flagellar hook-basal body complex protein FliE (107 aa).

Belongs to the FliE family.

The protein resides in the bacterial flagellum basal body. In Mesorhizobium japonicum (strain LMG 29417 / CECT 9101 / MAFF 303099) (Mesorhizobium loti (strain MAFF 303099)), this protein is Flagellar hook-basal body complex protein FliE.